The primary structure comprises 169 residues: S-ribosylhomocysteine lyase (169 aa).

Fe cation contacts are provided by H54, H58, and C128.

It belongs to the LuxS family. In terms of assembly, homodimer. Fe cation serves as cofactor.

It catalyses the reaction S-(5-deoxy-D-ribos-5-yl)-L-homocysteine = (S)-4,5-dihydroxypentane-2,3-dione + L-homocysteine. Its function is as follows. Involved in the synthesis of autoinducer 2 (AI-2) which is secreted by bacteria and is used to communicate both the cell density and the metabolic potential of the environment. The regulation of gene expression in response to changes in cell density is called quorum sensing. Catalyzes the transformation of S-ribosylhomocysteine (RHC) to homocysteine (HC) and 4,5-dihydroxy-2,3-pentadione (DPD). This chain is S-ribosylhomocysteine lyase, found in Shewanella halifaxensis (strain HAW-EB4).